The following is a 491-amino-acid chain: Leucine aminopeptidase 1 (491 aa).

Zn(2+)-binding residues include Lys252 and Asp257. The active site involves Lys264. Asp275, Asp334, and Glu336 together coordinate Zn(2+). Arg338 is an active-site residue.

The protein belongs to the peptidase M17 family. Zn(2+) is required as a cofactor. As to expression, expressed in the buccal cavity, pharynx, anterior gut and rectum.

The catalysed reaction is Release of an N-terminal amino acid, Xaa-|-Yaa-, in which Xaa is preferably Leu, but may be other amino acids including Pro although not Arg or Lys, and Yaa may be Pro. Amino acid amides and methyl esters are also readily hydrolyzed, but rates on arylamides are exceedingly low.. Its function is as follows. Probably acts as a digestive enzyme. This is Leucine aminopeptidase 1 (lap-1) from Caenorhabditis elegans.